Reading from the N-terminus, the 535-residue chain is MTDQTTRLPVRRALISVSDKTGILEFARELSALGVEILSTGGTYKLLKDNGVAAVEVADYTGFPEMMDGRVKTLHPKIHGGILGRRALDGAVMDEHGIKPIDLVAVNLYPFEATVAKPDCDLADAIENIDIGGPTMVRSAAKNHKDVAIVVNTGDYAGIVESLKAGGLTYAQRFDLALKAFEHTAAYDGMIANYLGTIDLAADTLSTEGRGAFPRTFNSQFIKAQEMRYGENPHQSAAFYVEAKKGEASVSTAIQLQGKELSFNNVADTDAALECVKSFVKPACVIVKHANPCGVAVVPEDEGGIRKAYDLAYATDTESAFGGIIAFNRELDGETAKAIVERQFVEVIIAPKISAAAREVVAAKANVRLLECGEWSAERAAGWDFKRVNGGLLVQSRDIGMIKAEDLKIVTQRAPSEQEIHDLIFAWKVAKFVKSNAIVYAKNRQTVGVGAGQMSRVNSARIAAIKAEHAGLQVQGAVMASDAFFPFRDGIDNAAKAGITAVIQPGGSMRDAEVIAAADEAGIAMVFTGMRHFRH.

Residues T6–V151 enclose the MGS-like domain.

It belongs to the PurH family.

It carries out the reaction (6R)-10-formyltetrahydrofolate + 5-amino-1-(5-phospho-beta-D-ribosyl)imidazole-4-carboxamide = 5-formamido-1-(5-phospho-D-ribosyl)imidazole-4-carboxamide + (6S)-5,6,7,8-tetrahydrofolate. It catalyses the reaction IMP + H2O = 5-formamido-1-(5-phospho-D-ribosyl)imidazole-4-carboxamide. The protein operates within purine metabolism; IMP biosynthesis via de novo pathway; 5-formamido-1-(5-phospho-D-ribosyl)imidazole-4-carboxamide from 5-amino-1-(5-phospho-D-ribosyl)imidazole-4-carboxamide (10-formyl THF route): step 1/1. It participates in purine metabolism; IMP biosynthesis via de novo pathway; IMP from 5-formamido-1-(5-phospho-D-ribosyl)imidazole-4-carboxamide: step 1/1. This chain is Bifunctional purine biosynthesis protein PurH, found in Ectopseudomonas mendocina (strain ymp) (Pseudomonas mendocina).